We begin with the raw amino-acid sequence, 317 residues long: Olfactory receptor 2F2 (317 aa).

The Extracellular segment spans residues 1–25 (MEIDNQTWVREFILLGLSSDWCTQI). Asn-5 is a glycosylation site (N-linked (GlcNAc...) asparagine). Residues 26-49 (SLFSLFLVTYLMTVLGNCLIVLLI) traverse the membrane as a helical segment. The Cytoplasmic portion of the chain corresponds to 50 to 57 (RLDSRLHT). The helical transmembrane segment at 58 to 79 (PMYFFLTNLSLVDVSYATSVVP) threads the bilayer. The Extracellular portion of the chain corresponds to 80–100 (QLLAHFLAEHKAIPFQSCAAQ). A disulfide bridge links Cys-97 with Cys-189. A helical membrane pass occupies residues 101-120 (LFFSLALGGIEFVLLAVMAY). The Cytoplasmic portion of the chain corresponds to 121–139 (DRHVAVSDRLRYSAIMHGG). Residues 140-158 (LCARLAITSWVSGSINSLV) form a helical membrane-spanning segment. Residues 159–195 (QTAITFQLPMCTNKFIDHISCELLAVVRLACVDTSSN) lie on the Extracellular side of the membrane. Residues 196-219 (EAAIMVSSIVLLMTPFCLVLLSYI) form a helical membrane-spanning segment. At 220 to 236 (RIISTILKIQSREGRKK) the chain is on the cytoplasmic side. Residues 237–259 (AFHTCASHLTVVALCYGTTIFTY) traverse the membrane as a helical segment. Residues 260 to 272 (IQPHSGPSVLQEK) lie on the Extracellular side of the membrane. A helical membrane pass occupies residues 273-292 (LISVFYAIVMPLLNPVIYSL). At 293–317 (RNKEVKGAWHKLLEKFSGLTSKLGT) the chain is on the cytoplasmic side.

Belongs to the G-protein coupled receptor 1 family.

The protein resides in the cell membrane. Its function is as follows. Odorant receptor. This is Olfactory receptor 2F2 (OR2F2) from Homo sapiens (Human).